We begin with the raw amino-acid sequence, 157 residues long: 6,7-dimethyl-8-ribityllumazine synthase (157 aa).

Residues Phe-22, Ala-56 to Glu-58, and Val-81 to Ile-83 each bind 5-amino-6-(D-ribitylamino)uracil. Residue Glu-86–Thr-87 coordinates (2S)-2-hydroxy-3-oxobutyl phosphate. The active-site Proton donor is His-89. Phe-114 is a 5-amino-6-(D-ribitylamino)uracil binding site. Residue Arg-128 coordinates (2S)-2-hydroxy-3-oxobutyl phosphate.

The protein belongs to the DMRL synthase family.

It carries out the reaction (2S)-2-hydroxy-3-oxobutyl phosphate + 5-amino-6-(D-ribitylamino)uracil = 6,7-dimethyl-8-(1-D-ribityl)lumazine + phosphate + 2 H2O + H(+). Its pathway is cofactor biosynthesis; riboflavin biosynthesis; riboflavin from 2-hydroxy-3-oxobutyl phosphate and 5-amino-6-(D-ribitylamino)uracil: step 1/2. Functionally, catalyzes the formation of 6,7-dimethyl-8-ribityllumazine by condensation of 5-amino-6-(D-ribitylamino)uracil with 3,4-dihydroxy-2-butanone 4-phosphate. This is the penultimate step in the biosynthesis of riboflavin. The protein is 6,7-dimethyl-8-ribityllumazine synthase of Chlamydia muridarum (strain MoPn / Nigg).